Consider the following 62-residue polypeptide: Small ribosomal subunit protein eS27 (62 aa).

4 residues coordinate Zn(2+): cysteine 17, cysteine 20, cysteine 36, and cysteine 39. The C4-type zinc finger occupies 17–39 (CPECNNEQIVFGSPATVVKCLTC).

Belongs to the eukaryotic ribosomal protein eS27 family. In terms of assembly, part of the 30S ribosomal subunit. Requires Zn(2+) as cofactor.

This chain is Small ribosomal subunit protein eS27, found in Methanocaldococcus jannaschii (strain ATCC 43067 / DSM 2661 / JAL-1 / JCM 10045 / NBRC 100440) (Methanococcus jannaschii).